Here is a 261-residue protein sequence, read N- to C-terminus: Ribonuclease HII (261 aa).

The RNase H type-2 domain occupies 71 to 259; it reads KYIAGVDEVG…VKEAKLHFDS (189 aa). Positions 77, 78, and 169 each coordinate a divalent metal cation.

This sequence belongs to the RNase HII family. Mn(2+) is required as a cofactor. The cofactor is Mg(2+).

It is found in the cytoplasm. It catalyses the reaction Endonucleolytic cleavage to 5'-phosphomonoester.. In terms of biological role, endonuclease that specifically degrades the RNA of RNA-DNA hybrids. This is Ribonuclease HII from Listeria monocytogenes serotype 4a (strain HCC23).